Here is a 156-residue protein sequence, read N- to C-terminus: Endogenous retrovirus group K member 9 Pro protein (156 aa).

A Peptidase A2 domain is found at 21–96; the sequence is FEGLVDTGAD…IPLNLWGRDL (76 aa). Asp-26 is an active-site residue. Positions 111-156 constitute a G-patch domain; it reads YSPTSQKIMTKRGYIPGKGLGKNEDGIKIPFEAKINQKREGIGYPF.

Belongs to the peptidase A2 family. HERV class-II K(HML-2) subfamily. As to quaternary structure, active as a homodimer. Post-translationally, autoproteolytically processed at the N-terminus. Expected C-terminal autoprocessing not detected. The sequence shown is that of the processed Pro protein.

The enzyme catalyses Processing at the authentic HIV-1 PR recognition site and release of the mature p17 matrix and the p24 capsid protein, as a result of the cleavage of the -SQNY-|-PIVQ- cleavage site.. Its function is as follows. Retroviral proteases have roles in the processing of the primary translation products and the maturation of the viral particle. Endogenous Pro proteins may have kept, lost or modified their original function during evolution. The sequence is that of Endogenous retrovirus group K member 9 Pro protein (ERVK-9) from Homo sapiens (Human).